The following is a 542-amino-acid chain: Global nitrogen regulator NrpR (542 aa).

Residues isoleucine 12 to leucine 77 are winged helix-turn-helix. NRD regions lie at residues arginine 85 to isoleucine 320 and arginine 321 to isoleucine 542.

This sequence belongs to the NrpR family. Homodimer.

Under nitrogen limitation, binding of the intracellular nitrogen metabolite 2-oxoglutarate to NrpR decreases the binding affinity of NrpR to DNA, leading to initiation of transcription. Functionally, transcriptional repressor of nitrogen fixation and assimilation genes. Binds to two tandem operators in the glnA and nif promoters, thereby blocking transcription of the genes. The chain is Global nitrogen regulator NrpR from Methanocaldococcus jannaschii (strain ATCC 43067 / DSM 2661 / JAL-1 / JCM 10045 / NBRC 100440) (Methanococcus jannaschii).